A 279-amino-acid chain; its full sequence is Bifunctional protein FolD (279 aa).

Residues 158–160, Ser183, and Ile224 each bind NADP(+); that span reads GRS.

This sequence belongs to the tetrahydrofolate dehydrogenase/cyclohydrolase family. Homodimer.

The catalysed reaction is (6R)-5,10-methylene-5,6,7,8-tetrahydrofolate + NADP(+) = (6R)-5,10-methenyltetrahydrofolate + NADPH. It catalyses the reaction (6R)-5,10-methenyltetrahydrofolate + H2O = (6R)-10-formyltetrahydrofolate + H(+). Its pathway is one-carbon metabolism; tetrahydrofolate interconversion. Catalyzes the oxidation of 5,10-methylenetetrahydrofolate to 5,10-methenyltetrahydrofolate and then the hydrolysis of 5,10-methenyltetrahydrofolate to 10-formyltetrahydrofolate. The chain is Bifunctional protein FolD from Caldicellulosiruptor saccharolyticus (strain ATCC 43494 / DSM 8903 / Tp8T 6331).